Reading from the N-terminus, the 278-residue chain is ADP-dependent (S)-NAD(P)H-hydrate dehydratase (278 aa).

The 268-residue stretch at 5–272 (TTEIVSRTII…TRIPTYMHRF (268 aa)) folds into the YjeF C-terminal domain. 3 residues coordinate (6S)-NADPHX: A40, G103, and H152. G214 serves as a coordination point for AMP. D215 is a binding site for (6S)-NADPHX.

It belongs to the NnrD/CARKD family. Homotetramer. Mg(2+) serves as cofactor.

It carries out the reaction (6S)-NADHX + ADP = AMP + phosphate + NADH + H(+). The enzyme catalyses (6S)-NADPHX + ADP = AMP + phosphate + NADPH + H(+). Functionally, catalyzes the dehydration of the S-form of NAD(P)HX at the expense of ADP, which is converted to AMP. Together with NAD(P)HX epimerase, which catalyzes the epimerization of the S- and R-forms, the enzyme allows the repair of both epimers of NAD(P)HX, a damaged form of NAD(P)H that is a result of enzymatic or heat-dependent hydration. This chain is ADP-dependent (S)-NAD(P)H-hydrate dehydratase, found in Lactiplantibacillus plantarum (strain ATCC BAA-793 / NCIMB 8826 / WCFS1) (Lactobacillus plantarum).